The sequence spans 379 residues: Cytochrome b (379 aa).

The next 4 helical transmembrane spans lie at 33–53, 77–98, 113–133, and 178–198; these read FGSL…FLAM, WTIR…FIHV, WNVG…GYVL, and FFAL…IHLL. 2 residues coordinate heme b: histidine 83 and histidine 97. Heme b-binding residues include histidine 182 and histidine 196. A ubiquinone is bound at residue histidine 201. The next 4 helical transmembrane spans lie at 226–246, 288–308, 320–340, and 347–367; these read TKDF…ALFY, LGGV…PFLQ, LSQF…WIGG, and FINI…FIMP.

The protein belongs to the cytochrome b family. The cytochrome bc1 complex contains 11 subunits: 3 respiratory subunits (MT-CYB, CYC1 and UQCRFS1), 2 core proteins (UQCRC1 and UQCRC2) and 6 low-molecular weight proteins (UQCRH/QCR6, UQCRB/QCR7, UQCRQ/QCR8, UQCR10/QCR9, UQCR11/QCR10 and a cleavage product of UQCRFS1). This cytochrome bc1 complex then forms a dimer. Heme b serves as cofactor.

The protein resides in the mitochondrion inner membrane. In terms of biological role, component of the ubiquinol-cytochrome c reductase complex (complex III or cytochrome b-c1 complex) that is part of the mitochondrial respiratory chain. The b-c1 complex mediates electron transfer from ubiquinol to cytochrome c. Contributes to the generation of a proton gradient across the mitochondrial membrane that is then used for ATP synthesis. The protein is Cytochrome b (MT-CYB) of Lepilemur sahamalazensis (Sahamalaza sportive lemur).